The chain runs to 240 residues: Small ribosomal subunit protein uS3m (240 aa).

This sequence belongs to the universal ribosomal protein uS3 family.

The protein resides in the mitochondrion. This is Small ribosomal subunit protein uS3m (RPS3) from Chondrus crispus (Carrageen Irish moss).